The sequence spans 250 residues: MKITPVKALTDNYIWMIQHGNHAVCVDPSEPSPVLEFLVRNRLMLAQTWVTHPHPDHEGGAAALWRGYMESPVYGESDIEAATHTVTAGTQFTFGDGQVTVWATPGHTDRHTSYLLETSDGIHVFCGDTLFSAGCGRVFTGTIEQLYDSFQRFNRLPENTLFYPAHEYTAANLRFAAHIEPDNADIQTALKAAERTPTLPVTLAHERRVNPFLRTEIPAVRQRAEALVGKTLNSGLEVFAALRELKNAYC.

Positions 52, 54, 56, 57, 107, 128, and 166 each coordinate Zn(2+).

This sequence belongs to the metallo-beta-lactamase superfamily. Glyoxalase II family. Monomer. The cofactor is Zn(2+).

It catalyses the reaction an S-(2-hydroxyacyl)glutathione + H2O = a 2-hydroxy carboxylate + glutathione + H(+). Its pathway is secondary metabolite metabolism; methylglyoxal degradation; (R)-lactate from methylglyoxal: step 2/2. Functionally, thiolesterase that catalyzes the hydrolysis of S-D-lactoyl-glutathione to form glutathione and D-lactic acid. In Neisseria meningitidis serogroup A / serotype 4A (strain DSM 15465 / Z2491), this protein is Hydroxyacylglutathione hydrolase.